The sequence spans 162 residues: SsrA-binding protein (162 aa).

The protein belongs to the SmpB family.

It is found in the cytoplasm. Required for rescue of stalled ribosomes mediated by trans-translation. Binds to transfer-messenger RNA (tmRNA), required for stable association of tmRNA with ribosomes. tmRNA and SmpB together mimic tRNA shape, replacing the anticodon stem-loop with SmpB. tmRNA is encoded by the ssrA gene; the 2 termini fold to resemble tRNA(Ala) and it encodes a 'tag peptide', a short internal open reading frame. During trans-translation Ala-aminoacylated tmRNA acts like a tRNA, entering the A-site of stalled ribosomes, displacing the stalled mRNA. The ribosome then switches to translate the ORF on the tmRNA; the nascent peptide is terminated with the 'tag peptide' encoded by the tmRNA and targeted for degradation. The ribosome is freed to recommence translation, which seems to be the essential function of trans-translation. The chain is SsrA-binding protein from Buchnera aphidicola subsp. Acyrthosiphon pisum (strain 5A).